The following is a 667-amino-acid chain: Bifunctional polymyxin resistance protein ArnA (667 aa).

Residues 1-304 (MKAIVFAYHD…EMGIVTDVRL (304 aa)) form a formyltransferase ArnAFT region. The Proton donor; for formyltransferase activity role is filled by His104. (6R)-10-formyltetrahydrofolate-binding positions include Arg114 and 136-140 (VKKAD). The dehydrogenase ArnADH stretch occupies residues 314-667 (RRTRVLILGV…TAAPKDELNA (354 aa)). NAD(+)-binding positions include Asp347 and 368–369 (DI). UDP-alpha-D-glucuronate is bound by residues Ala393, Tyr398, and 432–433 (TS). Glu434 (proton acceptor; for decarboxylase activity) is an active-site residue. Residues Arg460, Asn492, 526-535 (KLVDGGAQKR), and Tyr613 each bind UDP-alpha-D-glucuronate. The Proton donor; for decarboxylase activity role is filled by Arg619.

This sequence in the N-terminal section; belongs to the Fmt family. UDP-L-Ara4N formyltransferase subfamily. In the C-terminal section; belongs to the NAD(P)-dependent epimerase/dehydratase family. UDP-glucuronic acid decarboxylase subfamily. Homohexamer, formed by a dimer of trimers.

It catalyses the reaction UDP-alpha-D-glucuronate + NAD(+) = UDP-beta-L-threo-pentopyranos-4-ulose + CO2 + NADH. The catalysed reaction is UDP-4-amino-4-deoxy-beta-L-arabinose + (6R)-10-formyltetrahydrofolate = UDP-4-deoxy-4-formamido-beta-L-arabinose + (6S)-5,6,7,8-tetrahydrofolate + H(+). Its pathway is nucleotide-sugar biosynthesis; UDP-4-deoxy-4-formamido-beta-L-arabinose biosynthesis; UDP-4-deoxy-4-formamido-beta-L-arabinose from UDP-alpha-D-glucuronate: step 1/3. It participates in nucleotide-sugar biosynthesis; UDP-4-deoxy-4-formamido-beta-L-arabinose biosynthesis; UDP-4-deoxy-4-formamido-beta-L-arabinose from UDP-alpha-D-glucuronate: step 3/3. The protein operates within bacterial outer membrane biogenesis; lipopolysaccharide biosynthesis. Functionally, bifunctional enzyme that catalyzes the oxidative decarboxylation of UDP-glucuronic acid (UDP-GlcUA) to UDP-4-keto-arabinose (UDP-Ara4O) and the addition of a formyl group to UDP-4-amino-4-deoxy-L-arabinose (UDP-L-Ara4N) to form UDP-L-4-formamido-arabinose (UDP-L-Ara4FN). The modified arabinose is attached to lipid A and is required for resistance to polymyxin and cationic antimicrobial peptides. The protein is Bifunctional polymyxin resistance protein ArnA of Yersinia pseudotuberculosis serotype O:3 (strain YPIII).